We begin with the raw amino-acid sequence, 295 residues long: Glutamyl-Q tRNA(Asp) synthetase (295 aa).

L-glutamate contacts are provided by residues 6-10 (RFAPS) and E42. The 'HIGH' region signature appears at 9–19 (PSPTGAMHLGN). The Zn(2+) site is built by C93, C95, Y118, and C122. L-glutamate is bound by residues Y177 and R195. A 'KMSKS' region motif is present at residues 233-237 (RLAKR). Residue K236 coordinates ATP.

It belongs to the class-I aminoacyl-tRNA synthetase family. GluQ subfamily. Zn(2+) serves as cofactor.

In terms of biological role, catalyzes the tRNA-independent activation of glutamate in presence of ATP and the subsequent transfer of glutamate onto a tRNA(Asp). Glutamate is transferred on the 2-amino-5-(4,5-dihydroxy-2-cyclopenten-1-yl) moiety of the queuosine in the wobble position of the QUC anticodon. The sequence is that of Glutamyl-Q tRNA(Asp) synthetase from Deinococcus radiodurans (strain ATCC 13939 / DSM 20539 / JCM 16871 / CCUG 27074 / LMG 4051 / NBRC 15346 / NCIMB 9279 / VKM B-1422 / R1).